The chain runs to 94 residues: Cytochrome c-551 (94 aa).

An N-terminal signal peptide occupies residues 1–14; sequence MAFTAMTVAPSALA. Residues C24, C27, H28, and M73 each coordinate heme c.

Post-translationally, binds 1 heme c group covalently per subunit.

Efficiently couple electron transfer between the cytochrome bc1 complex and the photosynthetic reaction center. The polypeptide is Cytochrome c-551 (Allochromatium vinosum (strain ATCC 17899 / DSM 180 / NBRC 103801 / NCIMB 10441 / D) (Chromatium vinosum)).